Here is a 102-residue protein sequence, read N- to C-terminus: NADH-quinone oxidoreductase subunit K (102 aa).

The next 3 membrane-spanning stretches (helical) occupy residues 6–26 (MEHGLLLAAALFCIGLCGLLI), 30–50 (LLYILMSIEIMMNASALAFVV), and 65–85 (ILVISLAAAEASIGLALLLLL).

This sequence belongs to the complex I subunit 4L family. NDH-1 is composed of 13 different subunits. Subunits NuoA, H, J, K, L, M, N constitute the membrane sector of the complex.

The protein localises to the cell inner membrane. It catalyses the reaction a quinone + NADH + 5 H(+)(in) = a quinol + NAD(+) + 4 H(+)(out). In terms of biological role, NDH-1 shuttles electrons from NADH, via FMN and iron-sulfur (Fe-S) centers, to quinones in the respiratory chain. The immediate electron acceptor for the enzyme in this species is believed to be ubiquinone. Couples the redox reaction to proton translocation (for every two electrons transferred, four hydrogen ions are translocated across the cytoplasmic membrane), and thus conserves the redox energy in a proton gradient. The protein is NADH-quinone oxidoreductase subunit K of Shewanella oneidensis (strain ATCC 700550 / JCM 31522 / CIP 106686 / LMG 19005 / NCIMB 14063 / MR-1).